Reading from the N-terminus, the 351-residue chain is UPF0104 membrane protein MTH_887 (351 aa).

Transmembrane regions (helical) follow at residues 20–40, 51–71, 137–157, 165–185, 244–264, 275–295, 304–324, and 328–348; these read IVLS…FAGF, SPYF…LWTL, VFEF…IMTW, IVVS…VYAG, FVIG…RLYV, AVPL…PILP, ILVG…AASV, and IASY…YGKQ.

Belongs to the UPF0104 family.

It localises to the cell membrane. The chain is UPF0104 membrane protein MTH_887 from Methanothermobacter thermautotrophicus (strain ATCC 29096 / DSM 1053 / JCM 10044 / NBRC 100330 / Delta H) (Methanobacterium thermoautotrophicum).